The primary structure comprises 99 residues: Putative membrane protein insertion efficiency factor (99 aa).

Belongs to the UPF0161 family.

The protein localises to the cell membrane. Its function is as follows. Could be involved in insertion of integral membrane proteins into the membrane. This chain is Putative membrane protein insertion efficiency factor, found in Corynebacterium efficiens (strain DSM 44549 / YS-314 / AJ 12310 / JCM 11189 / NBRC 100395).